A 243-amino-acid chain; its full sequence is Aliphatic sulfonates import ATP-binding protein SsuB (243 aa).

An ABC transporter domain is found at 11–230 (ATVRGLRKSY…RTHPSFASYT (220 aa)). An ATP-binding site is contributed by 43–50 (GRSGSGKS).

It belongs to the ABC transporter superfamily. Aliphatic sulfonates importer (TC 3.A.1.17.2) family. As to quaternary structure, the complex is composed of two ATP-binding proteins (SsuB), two transmembrane proteins (SsuC) and a solute-binding protein (SsuA).

It is found in the cell membrane. The enzyme catalyses ATP + H2O + aliphatic sulfonate-[sulfonate-binding protein]Side 1 = ADP + phosphate + aliphatic sulfonateSide 2 + [sulfonate-binding protein]Side 1.. Functionally, part of the ABC transporter complex SsuABC involved in aliphatic sulfonates import. Responsible for energy coupling to the transport system. Is also involved in taurine transport. Seems to not be involved in long chain aliphatic sulfonates transport (chain length of eight carbon atoms or more). This Corynebacterium glutamicum (strain ATCC 13032 / DSM 20300 / JCM 1318 / BCRC 11384 / CCUG 27702 / LMG 3730 / NBRC 12168 / NCIMB 10025 / NRRL B-2784 / 534) protein is Aliphatic sulfonates import ATP-binding protein SsuB.